Consider the following 221-residue polypeptide: Dynein light chain Tctex-type 4 (221 aa).

Disordered regions lie at residues 1–52 and 65–87; these read MASR…SRRG and NSLV…VPPL. Over residues 10–21 the composition is skewed to basic and acidic residues; the sequence is RQEEENAKDSGR. Phosphoserine is present on S66.

This sequence belongs to the dynein light chain Tctex-type family. As to quaternary structure, interacts with ENG/endoglin, TGFBR2 and TGFBR3. Interacts with PPP1CC. Ubiquitously expressed. Expressed in testis (at protein level).

It localises to the cell projection. It is found in the cilium. The protein resides in the flagellum. Its subcellular location is the cytoplasmic vesicle. The protein localises to the secretory vesicle. It localises to the acrosome. It is found in the cytoplasm. The protein resides in the cytoskeleton. Its subcellular location is the cilium axoneme. The protein localises to the nucleus. It localises to the microtubule organizing center. The chain is Dynein light chain Tctex-type 4 from Homo sapiens (Human).